Consider the following 457-residue polypeptide: Siroheme synthase (457 aa).

A precorrin-2 dehydrogenase /sirohydrochlorin ferrochelatase region spans residues 1–204 (MDHLPIFCQL…ADEKAVNATT (204 aa)). NAD(+) contacts are provided by residues 22–23 (DV) and 43–44 (LT). Position 128 is a phosphoserine (S128). A uroporphyrinogen-III C-methyltransferase region spans residues 216-457 (GEVVLVGAGP…RDKLNWFSSH (242 aa)). An S-adenosyl-L-methionine-binding site is contributed by P225. D248 functions as the Proton acceptor in the catalytic mechanism. K270 serves as the catalytic Proton donor. Residues 301-303 (GGD), I306, 331-332 (TA), M382, and G411 contribute to the S-adenosyl-L-methionine site.

The protein in the N-terminal section; belongs to the precorrin-2 dehydrogenase / sirohydrochlorin ferrochelatase family. This sequence in the C-terminal section; belongs to the precorrin methyltransferase family.

It catalyses the reaction uroporphyrinogen III + 2 S-adenosyl-L-methionine = precorrin-2 + 2 S-adenosyl-L-homocysteine + H(+). The catalysed reaction is precorrin-2 + NAD(+) = sirohydrochlorin + NADH + 2 H(+). The enzyme catalyses siroheme + 2 H(+) = sirohydrochlorin + Fe(2+). Its pathway is cofactor biosynthesis; adenosylcobalamin biosynthesis; precorrin-2 from uroporphyrinogen III: step 1/1. The protein operates within cofactor biosynthesis; adenosylcobalamin biosynthesis; sirohydrochlorin from precorrin-2: step 1/1. It functions in the pathway porphyrin-containing compound metabolism; siroheme biosynthesis; precorrin-2 from uroporphyrinogen III: step 1/1. It participates in porphyrin-containing compound metabolism; siroheme biosynthesis; siroheme from sirohydrochlorin: step 1/1. Its pathway is porphyrin-containing compound metabolism; siroheme biosynthesis; sirohydrochlorin from precorrin-2: step 1/1. Its function is as follows. Multifunctional enzyme that catalyzes the SAM-dependent methylations of uroporphyrinogen III at position C-2 and C-7 to form precorrin-2 via precorrin-1. Then it catalyzes the NAD-dependent ring dehydrogenation of precorrin-2 to yield sirohydrochlorin. Finally, it catalyzes the ferrochelation of sirohydrochlorin to yield siroheme. In Salmonella arizonae (strain ATCC BAA-731 / CDC346-86 / RSK2980), this protein is Siroheme synthase.